A 230-amino-acid polypeptide reads, in one-letter code: MCFSLPSINKEGYLFIVVSFIVTCIAFSISWGFGVTCLFPTLLCTYFFRDPARIIPGNKDLVLSPADGVISKIEEVSYPLSTNNGEEKKFTLVSIFLSVLNVHVNRIPISGTVKEMHYKKGKFVSAMSDRSSNENEKQVIVIEYTKGKEIIVEQIAGLIARRIVCNLRVSQSVKAGERFGIIRFGSRVNIYVPTDVEIRVSEGQTVVGGETIIANLNKENTQEKLTFDLV.

The active-site Schiff-base intermediate with substrate; via pyruvic acid is Ser-186. Ser-186 bears the Pyruvic acid (Ser); by autocatalysis mark.

The protein belongs to the phosphatidylserine decarboxylase family. PSD-A subfamily. As to quaternary structure, heterodimer of a large membrane-associated beta subunit and a small pyruvoyl-containing alpha subunit. The cofactor is pyruvate. Post-translationally, is synthesized initially as an inactive proenzyme. Formation of the active enzyme involves a self-maturation process in which the active site pyruvoyl group is generated from an internal serine residue via an autocatalytic post-translational modification. Two non-identical subunits are generated from the proenzyme in this reaction, and the pyruvate is formed at the N-terminus of the alpha chain, which is derived from the carboxyl end of the proenzyme. The post-translation cleavage follows an unusual pathway, termed non-hydrolytic serinolysis, in which the side chain hydroxyl group of the serine supplies its oxygen atom to form the C-terminus of the beta chain, while the remainder of the serine residue undergoes an oxidative deamination to produce ammonia and the pyruvoyl prosthetic group on the alpha chain.

Its subcellular location is the cell membrane. The catalysed reaction is a 1,2-diacyl-sn-glycero-3-phospho-L-serine + H(+) = a 1,2-diacyl-sn-glycero-3-phosphoethanolamine + CO2. It functions in the pathway phospholipid metabolism; phosphatidylethanolamine biosynthesis; phosphatidylethanolamine from CDP-diacylglycerol: step 2/2. Catalyzes the formation of phosphatidylethanolamine (PtdEtn) from phosphatidylserine (PtdSer). This Wolbachia sp. subsp. Brugia malayi (strain TRS) protein is Phosphatidylserine decarboxylase proenzyme.